The chain runs to 237 residues: Ribonuclease 3 (237 aa).

The region spanning 4–133 (LTELEKSLGV…VLAAIYLDKG (130 aa)) is the RNase III domain. Glu46 contacts Mg(2+). Catalysis depends on residues Asp50 and Glu122. Glu122 is a binding site for Mg(2+). The DRBM domain occupies 160–229 (DYKSRLQELV…AKEALQQFEN (70 aa)).

The protein belongs to the ribonuclease III family. In terms of assembly, homodimer. Mg(2+) is required as a cofactor.

Its subcellular location is the cytoplasm. The enzyme catalyses Endonucleolytic cleavage to 5'-phosphomonoester.. Digests double-stranded RNA. Involved in the processing of primary rRNA transcript to yield the immediate precursors to the large and small rRNAs (23S and 16S). Processes some mRNAs, and tRNAs when they are encoded in the rRNA operon. Processes pre-crRNA and tracrRNA of type II CRISPR loci if present in the organism. This chain is Ribonuclease 3, found in Dehalococcoides mccartyi (strain ATCC BAA-2266 / KCTC 15142 / 195) (Dehalococcoides ethenogenes (strain 195)).